The sequence spans 349 residues: tRNA pseudouridine synthase D (349 aa).

A substrate-binding site is contributed by Phe-27. The Nucleophile role is filled by Asp-80. Substrate is bound at residue Asn-129. Residues 155-303 (GVPNYFGPQR…VEAARRAMLL (149 aa)) enclose the TRUD domain. Phe-329 is a binding site for substrate.

This sequence belongs to the pseudouridine synthase TruD family.

It carries out the reaction uridine(13) in tRNA = pseudouridine(13) in tRNA. In terms of biological role, responsible for synthesis of pseudouridine from uracil-13 in transfer RNAs. The sequence is that of tRNA pseudouridine synthase D from Cronobacter sakazakii (strain ATCC BAA-894) (Enterobacter sakazakii).